The primary structure comprises 615 residues: Erythritol-mannosyl-transferase 1 (615 aa).

Positions 366–387 (RTPNNTGASTPTAPISSPDFEE) are disordered. Residues 367 to 380 (TPNNTGASTPTAPI) are compositionally biased toward polar residues.

The protein belongs to the UDP-glycosyltransferase family.

It is found in the vacuole membrane. It functions in the pathway secondary metabolite biosynthesis. Functionally, erythritol-mannosyl-transferase; part of the gene cluster that mediates the biosynthesis of mannosylerythritol lipids (MELs), surface-active substances that enhance the availability of water-insoluble substrates. Mannosylerythritol lipid production is responsible for hemolytic activity of Ustilago maydis. Depending on the number of acetyl groups, mannosylerythritol lipids can be differentiated into MEL A (fully acetylated), MEL B and MEL C (monoacetylated at R-6 and R-4, respectively), and the fully deacetylated MEL D. The first step in the pathway is the generation of mannosylerythritol by the glycosyltransferase EMT1 which catalyzes the transfer of GDP-mannose to the C-4 atom of meso-erythritol. This reaction has to be stereospecific, since only mannosyl-D-erythritol is generated. The produced disaccharide is subsequently acylated with fatty acids of various lengths derived from the peroxisomal beta-oxidation by the peroxisomal acyltransferases MAC1 and MAC2 at positions C-2 and C-3, repectively. The existence of MEL derivatives which carry an acetyl group at C-2 implies that at least MAC1 also accepts acetyl-CoA as a donor. The final step of MEL biosynthesis is the acetylation of the fully acylated mannosylerythritol lipids catalyzed by the acetyl-CoA-dependent acetyltransferase MAT1. MAT1 displays a relaxed regioselectivity and is able to transfer acetylgroups to both positions C-4 and C-6 of the mannosyl moiety. The chain is Erythritol-mannosyl-transferase 1 from Mycosarcoma maydis (Corn smut fungus).